A 190-amino-acid chain; its full sequence is Guanylate kinase (190 aa).

In terms of domain architecture, Guanylate kinase-like spans 8–188; that stretch reads GRLVILAGPS…AVKAIEDVLL (181 aa). 15-22 is a binding site for ATP; it reads GPSAVGKS.

Belongs to the guanylate kinase family.

It is found in the cytoplasm. It carries out the reaction GMP + ATP = GDP + ADP. In terms of biological role, essential for recycling GMP and indirectly, cGMP. The polypeptide is Guanylate kinase (Corynebacterium glutamicum (strain ATCC 13032 / DSM 20300 / JCM 1318 / BCRC 11384 / CCUG 27702 / LMG 3730 / NBRC 12168 / NCIMB 10025 / NRRL B-2784 / 534)).